Here is a 117-residue protein sequence, read N- to C-terminus: uncharacterized protein (117 aa).

Polar residues predominate over residues 1 to 12 (MAQNSVSLSAGD). 2 disordered regions span residues 1 to 30 (MAQN…NPSA) and 43 to 87 (VTRL…SPYP).

This is an uncharacterized protein from Mus musculus (Mouse).